The primary structure comprises 208 residues: Type 4 adapter protein LvgA (208 aa).

In terms of assembly, the T4BSS is a complex nanomachine composed of several subcomplexes. This subunit is part of the Type IV Coupling Complex (T4CC), a subcomplex composed of the DotLMNYZ core and the IcmSW-LvgA adapter subunits, linked by the C-terminal tail of DotL. Interacts with DotL, IcmS and IcmW. Interacts with various effector proteins, including VpdB, SetA, PieA and SidH.

Its subcellular location is the cytoplasm. Component of the Dot/Icm type IVB secretion system (T4BSS), which is used to inject bacterial effector proteins into eukaryotic host cells. Part of a subcomplex which recruits effector proteins and delivers them to the core transmembrane subcomplex. Is a critical subunit for binding a subset of effector proteins. Recognizes more than one type of binding motif. May be a critical factor that confers host specificity. The chain is Type 4 adapter protein LvgA from Legionella pneumophila subsp. pneumophila (strain Philadelphia 1 / ATCC 33152 / DSM 7513).